We begin with the raw amino-acid sequence, 385 residues long: Flavin-dependent monooxygenase (385 aa).

FAD contacts are provided by residues 12–15, 34–36, 44–47, Arg-105, Tyr-267, Asp-289, and 296–302; these read ASIA, EKN, YAID, and PLSGQGT.

Belongs to the aromatic-ring hydroxylase family. Requires FAD as cofactor.

The catalysed reaction is 7-chlorotetracycline + NADPH + O2 + H(+) = (1S,10S,10aS)-3-(CONH2)-9-Cl-1-(Me2N)-3,3a,4,10-(HO)4-10-Me-2,5-dioxo-1H,10aH,11H,11aH-cyclopenta[b]anthracen-6-olate + CO + NADP(+) + H2O. It carries out the reaction a tetracycline + NADPH + O2 + H(+) = a (1S,10aS)-3-(CONH2)-1-(Me2N)-3,3a,4,6-(HO)4-2,5-dioxo-1H,10aH,11H,11aH-cyclopenta[b]anthracene + CO + NADP(+) + H2O. With respect to regulation, inhibited by anhydrotetracycline. Functionally, an FAD-requiring monooxygenase active on tetracycline antibiotic and some of its derivatives, which leads to their inactivation. Expression in E.coli confers high resistance to oxytetracycline, slightly less resistance to tetracycline, moderate resistance to minocycline but no resistance to tigecycline. Degrades tetracycline and oxytetracycline; the reaction requires NADPH. Degrades and confers resistance to chlortetracycline. The sequence is that of Flavin-dependent monooxygenase from Unknown prokaryotic organism.